Consider the following 512-residue polypeptide: Serine--tRNA ligase, cytoplasmic (512 aa).

Met1 bears the N-acetylmethionine mark. Residues 9-61 (RVDKGGDPALIRETQEKRFKDPGLVDQLVKADSEWRRCRFRADNLNKLKNLCS) form an interaction with tRNA region. Ser241 is subject to Phosphoserine. 2 residues coordinate L-serine: Thr271 and Arg302. Residues 302 to 304 (RQE) and 318 to 321 (VHQF) each bind ATP. N6-acetyllysine is present on Lys323. Glu325 contacts L-serine. 391–394 (ELVS) is an ATP binding site. Asn427 serves as a coordination point for L-serine. Residues 470 to 512 (FVKPAPIDQEPSKKQKKQHEGSKKKAKEVPLENQLQSMEVTEA) are disordered. The segment covering 479–499 (EPSKKQKKQHEGSKKKAKEVP) has biased composition (basic and acidic residues). Residues 482-494 (KKQKKQHEGSKKK) carry the Nuclear localization signal motif. Residues 502–512 (NQLQSMEVTEA) are compositionally biased toward polar residues. Residue Ser506 is modified to Phosphoserine.

The protein belongs to the class-II aminoacyl-tRNA synthetase family. Type-1 seryl-tRNA synthetase subfamily. Homodimer. The tRNA molecule may bind across the dimer. Interacts with SIRT2. Interacts with METTL6; interaction is required for the tRNA N(3)-methylcytidine methyltransferase activity of METTL6.

Its subcellular location is the cytoplasm. It is found in the nucleus. The enzyme catalyses tRNA(Ser) + L-serine + ATP = L-seryl-tRNA(Ser) + AMP + diphosphate + H(+). The catalysed reaction is tRNA(Sec) + L-serine + ATP = L-seryl-tRNA(Sec) + AMP + diphosphate + H(+). The protein operates within aminoacyl-tRNA biosynthesis; selenocysteinyl-tRNA(Sec) biosynthesis; L-seryl-tRNA(Sec) from L-serine and tRNA(Sec): step 1/1. In terms of biological role, catalyzes the attachment of serine to tRNA(Ser) in a two-step reaction: serine is first activated by ATP to form Ser-AMP and then transferred to the acceptor end of tRNA(Ser). Is probably also able to aminoacylate tRNA(Sec) with serine, to form the misacylated tRNA L-seryl-tRNA(Sec), which will be further converted into selenocysteinyl-tRNA(Sec). In the nucleus, binds to the VEGFA core promoter and prevents MYC binding and transcriptional activation by MYC. Recruits SIRT2 to the VEGFA promoter, promoting deacetylation of histone H4 at 'Lys-16' (H4K16). Thereby, inhibits the production of VEGFA and sprouting angiogenesis mediated by VEGFA. This Mus musculus (Mouse) protein is Serine--tRNA ligase, cytoplasmic (Sars1).